The chain runs to 549 residues: MPPKSSTTKHIFVTGGVASSLGKGLTASSLGMLLKARGLRVVMQKLDPYLNVDPGTMNPFQHGEVFVTNDGAETDLDIGHYERFLDRDLDGSANVTTGQVYSTVIAKERRGEYLGDTVQVIPHITNEIKHRIRRMATDEVDVVITEVGGTVGDIESLPFLETVRQVRHEVGRDNVFVVHISLLPYIGPSGELKTKPTQHSVAALRNIGIQPDAIVLRCDREVPTAIKRKISLMCDVDEAAVVACPDARSIYDIPKVIHTEGLDAYVVRRMDLPFRDVDWTTWDDLLDRVHNPEHEIVMALVGKYIDLPDAYLSVTEALRAGGFANKARVKIKWVTSDDCKTPAGARVQLGDVDAICIPGGFGERGVTGKVGAIQYARENGIPLLGLCLGLQCIVVEAARNLAGVADANSTEFDPATAHPVVSTMAEQLDIVAGEGDMGGTMRLGMYPAKLAEGSIVREVYDGKEYVEERHRHRYEVNNAYRAELEKKAGIVFSGTSPDGKLVEYVEYPRDVHPYLVATQAHPELRSRPTRPHPLFAGLVKAAVERKTSK.

The tract at residues Met1–Leu272 is amidoligase domain. A CTP-binding site is contributed by Ser19. Ser19 lines the UTP pocket. Residues Ser20–Leu25 and Asp77 each bind ATP. Mg(2+) contacts are provided by Asp77 and Glu146. CTP contacts are provided by residues Asp153 to Glu155, Lys193 to Gln198, and Lys229. UTP-binding positions include Lys193–Gln198 and Lys229. In terms of domain architecture, Glutamine amidotransferase type-1 spans Val301 to Ser548. An L-glutamine-binding site is contributed by Gly360. Cys387 (nucleophile; for glutamine hydrolysis) is an active-site residue. Residues Leu388 to Gln391, Glu411, and Arg473 each bind L-glutamine. Catalysis depends on residues His521 and Glu523.

It belongs to the CTP synthase family. As to quaternary structure, homotetramer.

The catalysed reaction is UTP + L-glutamine + ATP + H2O = CTP + L-glutamate + ADP + phosphate + 2 H(+). The enzyme catalyses L-glutamine + H2O = L-glutamate + NH4(+). It carries out the reaction UTP + NH4(+) + ATP = CTP + ADP + phosphate + 2 H(+). It functions in the pathway pyrimidine metabolism; CTP biosynthesis via de novo pathway; CTP from UDP: step 2/2. Its activity is regulated as follows. Allosterically activated by GTP, when glutamine is the substrate; GTP has no effect on the reaction when ammonia is the substrate. The allosteric effector GTP functions by stabilizing the protein conformation that binds the tetrahedral intermediate(s) formed during glutamine hydrolysis. Inhibited by the product CTP, via allosteric rather than competitive inhibition. Catalyzes the ATP-dependent amination of UTP to CTP with either L-glutamine or ammonia as the source of nitrogen. Regulates intracellular CTP levels through interactions with the four ribonucleotide triphosphates. The sequence is that of CTP synthase from Streptomyces coelicolor (strain ATCC BAA-471 / A3(2) / M145).